Reading from the N-terminus, the 402-residue chain is Imidazolonepropionase (402 aa).

Fe(3+) is bound by residues His-66 and His-68. 2 residues coordinate Zn(2+): His-66 and His-68. 3 residues coordinate 4-imidazolone-5-propanoate: Arg-75, Tyr-138, and His-171. Tyr-138 provides a ligand contact to N-formimidoyl-L-glutamate. Position 236 (His-236) interacts with Fe(3+). His-236 is a binding site for Zn(2+). Gln-239 provides a ligand contact to 4-imidazolone-5-propanoate. Position 311 (Asp-311) interacts with Fe(3+). Zn(2+) is bound at residue Asp-311. The N-formimidoyl-L-glutamate site is built by Asn-313 and Gly-315. Thr-316 is a 4-imidazolone-5-propanoate binding site.

The protein belongs to the metallo-dependent hydrolases superfamily. HutI family. Requires Zn(2+) as cofactor. It depends on Fe(3+) as a cofactor.

It is found in the cytoplasm. The catalysed reaction is 4-imidazolone-5-propanoate + H2O = N-formimidoyl-L-glutamate. Its pathway is amino-acid degradation; L-histidine degradation into L-glutamate; N-formimidoyl-L-glutamate from L-histidine: step 3/3. Functionally, catalyzes the hydrolytic cleavage of the carbon-nitrogen bond in imidazolone-5-propanoate to yield N-formimidoyl-L-glutamate. It is the third step in the universal histidine degradation pathway. The chain is Imidazolonepropionase from Vibrio cholerae serotype O1 (strain ATCC 39541 / Classical Ogawa 395 / O395).